Reading from the N-terminus, the 618-residue chain is Serine--tRNA ligase, cytoplasmic (618 aa).

Residue 417–419 (TSE) participates in L-serine binding. Residue 448–450 (RTE) coordinates ATP. Glu-472 contributes to the L-serine binding site. Position 536-539 (536-539 (EVSS)) interacts with ATP. Ser-570 serves as a coordination point for L-serine.

It belongs to the class-II aminoacyl-tRNA synthetase family. Type-1 seryl-tRNA synthetase subfamily. In terms of assembly, homodimer. The tRNA molecule binds across the dimer.

It localises to the cytoplasm. It catalyses the reaction tRNA(Ser) + L-serine + ATP = L-seryl-tRNA(Ser) + AMP + diphosphate + H(+). It carries out the reaction tRNA(Sec) + L-serine + ATP = L-seryl-tRNA(Sec) + AMP + diphosphate + H(+). It participates in aminoacyl-tRNA biosynthesis; selenocysteinyl-tRNA(Sec) biosynthesis; L-seryl-tRNA(Sec) from L-serine and tRNA(Sec): step 1/1. Its function is as follows. Catalyzes the attachment of serine to tRNA(Ser). Is also able to aminoacylate tRNA(Sec) with serine, to form the misacylated tRNA L-seryl-tRNA(Sec), which will be further converted into selenocysteinyl-tRNA(Sec). The polypeptide is Serine--tRNA ligase, cytoplasmic (Plasmodium falciparum (isolate 3D7)).